We begin with the raw amino-acid sequence, 240 residues long: Cilia- and flagella-associated protein 77 (240 aa).

It belongs to the CFAP77 family.

Its subcellular location is the cytoplasm. It is found in the cytoskeleton. The protein resides in the cilium axoneme. The protein localises to the flagellum axoneme. Functionally, microtubule inner protein (MIP) part of the dynein-decorated doublet microtubules (DMTs) in cilia axoneme, which is required for motile cilia beating. The protein is Cilia- and flagella-associated protein 77 of Danio rerio (Zebrafish).